The chain runs to 163 residues: Auxin-responsive protein IAA5 (163 aa).

Positions 15–19 match the EAR-like (transcriptional repression) motif; the sequence is LRLGL. The PB1 domain occupies 74 to 160; the sequence is SSYVKVSVDG…KRLRIMKRSC (87 aa).

Belongs to the Aux/IAA family. In terms of assembly, homodimers and heterodimers. As to expression, highly expressed in stems and flowers.

The protein resides in the nucleus. Its function is as follows. Aux/IAA proteins are short-lived transcriptional factors that function as repressors of early auxin response genes at low auxin concentrations. Repression is thought to result from the interaction with auxin response factors (ARFs), proteins that bind to the auxin-responsive promoter element (AuxRE). Formation of heterodimers with ARF proteins may alter their ability to modulate early auxin response genes expression. The chain is Auxin-responsive protein IAA5 (IAA5) from Arabidopsis thaliana (Mouse-ear cress).